The following is a 149-amino-acid chain: Arginine repressor (149 aa).

It belongs to the ArgR family.

The protein localises to the cytoplasm. Its pathway is amino-acid biosynthesis; L-arginine biosynthesis [regulation]. In terms of biological role, regulates arginine biosynthesis genes. In Chlorobaculum parvum (strain DSM 263 / NCIMB 8327) (Chlorobium vibrioforme subsp. thiosulfatophilum), this protein is Arginine repressor.